Here is a 296-residue protein sequence, read N- to C-terminus: Tyrosine recombinase XerC (296 aa).

The Core-binding (CB) domain maps to 1 to 84 (MEKIQQAYLY…TLRSFYEYWM (84 aa)). The Tyr recombinase domain occupies 105–286 (YLPHFFYEEE…TNEQLRKVYL (182 aa)). Residues R145, K169, H238, R241, and H264 contribute to the active site. Residue Y273 is the O-(3'-phospho-DNA)-tyrosine intermediate of the active site.

The protein belongs to the 'phage' integrase family. XerC subfamily. In terms of assembly, forms a cyclic heterotetrameric complex composed of two molecules of XerC and two molecules of XerD.

The protein resides in the cytoplasm. Functionally, site-specific tyrosine recombinase, which acts by catalyzing the cutting and rejoining of the recombining DNA molecules. The XerC-XerD complex is essential to convert dimers of the bacterial chromosome into monomers to permit their segregation at cell division. It also contributes to the segregational stability of plasmids. This is Tyrosine recombinase XerC from Staphylococcus saprophyticus subsp. saprophyticus (strain ATCC 15305 / DSM 20229 / NCIMB 8711 / NCTC 7292 / S-41).